Here is a 658-residue protein sequence, read N- to C-terminus: Threonine--tRNA ligase (658 aa).

In terms of domain architecture, TGS spans 1–64; that stretch reads MLNSVSLTFP…GKSGKVEIIT (64 aa). The interval 246–549 is catalytic; sequence DHRKLGREMD…LIENYSGHFP (304 aa). Zn(2+)-binding residues include Cys343, His394, and His526.

It belongs to the class-II aminoacyl-tRNA synthetase family. In terms of assembly, homodimer. It depends on Zn(2+) as a cofactor.

The protein resides in the cytoplasm. It carries out the reaction tRNA(Thr) + L-threonine + ATP = L-threonyl-tRNA(Thr) + AMP + diphosphate + H(+). Catalyzes the attachment of threonine to tRNA(Thr) in a two-step reaction: L-threonine is first activated by ATP to form Thr-AMP and then transferred to the acceptor end of tRNA(Thr). Also edits incorrectly charged L-seryl-tRNA(Thr). The chain is Threonine--tRNA ligase from Mesorhizobium japonicum (strain LMG 29417 / CECT 9101 / MAFF 303099) (Mesorhizobium loti (strain MAFF 303099)).